The chain runs to 335 residues: MNTEATHDQNEALTTGARLRNAREQLGLSQQAVAERLCLKVSTVRDIEEDKAPADLASTFLRGYIRSYARLVHIPEEELLPGLEKQAPLRAAKVAPMQSFSLGKRRKKRDGWLMTFTWLVLFVVIGLSGAWWWQDHKAQQEEITTMADQSSAELNNNQSQSVPLDTSTTTDQAMATTPTSPVDTTATNTQTPAVTAPAPAVDPQQNAVVPPSQANVDTAATPAPAATTTPDGAAPLPTDQAGVTTPAVDPNALVMNFTADCWLEVTDATGKKLFSGMQRKDGNLNLTGQAPYKLKIGAPAAVQIQYQGKPVDLSRFIRTNQVARLTLNAEQSPAQ.

The Cytoplasmic portion of the chain corresponds to 1–111 (MNTEATHDQN…LGKRRKKRDG (111 aa)). Residues 19-71 (LRNAREQLGLSQQAVAERLCLKVSTVRDIEEDKAPADLASTFLRGYIRSYARL) form the HTH cro/C1-type domain. Residues 30–49 (QQAVAERLCLKVSTVRDIEE) constitute a DNA-binding region (H-T-H motif). The chain crosses the membrane as a helical; Signal-anchor for type II membrane protein span at residues 112-132 (WLMTFTWLVLFVVIGLSGAWW). Topologically, residues 133–335 (WQDHKAQQEE…TLNAEQSPAQ (203 aa)) are periplasmic. Residues 148-164 (DQSSAELNNNQSQSVPL) show a composition bias toward polar residues. The tract at residues 148-244 (DQSSAELNNN…PLPTDQAGVT (97 aa)) is disordered. Composition is skewed to low complexity over residues 165-205 (DTST…DPQQ) and 217-239 (DTAA…LPTD).

This sequence belongs to the RodZ family.

It is found in the cell inner membrane. In terms of biological role, cytoskeletal protein that is involved in cell-shape control through regulation of the length of the long axis. This chain is Cytoskeleton protein RodZ, found in Escherichia coli O127:H6 (strain E2348/69 / EPEC).